Reading from the N-terminus, the 256-residue chain is Complex I assembly factor TIMMDC1, mitochondrial (256 aa).

The disordered stretch occupies residues 1–27; it reads MAQSDPPKSPDPPLPTSIRNPQTPESG. The next 2 helical transmembrane spans lie at 111 to 131 and 159 to 179; these read WGWR…GLTV and VGLL…GALI.

This sequence belongs to the Tim17/Tim22/Tim23 family. As to quaternary structure, associates with the intermediate 315 kDa subcomplex of incompletely assembled complex I.

Its subcellular location is the mitochondrion membrane. In terms of biological role, chaperone protein involved in the assembly of the mitochondrial NADH:ubiquinone oxidoreductase complex (complex I). Participates in constructing the membrane arm of complex I. The polypeptide is Complex I assembly factor TIMMDC1, mitochondrial (timmdc1) (Xenopus laevis (African clawed frog)).